We begin with the raw amino-acid sequence, 473 residues long: Ribulose bisphosphate carboxylase large chain (473 aa).

The tract at residues 1-136 (MAVKKYSAGV…RLEDVRFPLA (136 aa)) is necessary and sufficient to target proteins to carboxysomes, interacts with shell proteins. Substrate is bound by residues asparagine 116 and threonine 166. Residue lysine 168 is the Proton acceptor of the active site. Position 170 (lysine 170) interacts with substrate. Mg(2+) contacts are provided by lysine 194, aspartate 196, and glutamate 197. Residue lysine 194 is modified to N6-carboxylysine. Histidine 287 functions as the Proton acceptor in the catalytic mechanism. Positions 288, 320, and 372 each coordinate substrate.

The protein belongs to the RuBisCO large chain family. Type I subfamily. As to quaternary structure, heterohexadecamer of 8 large chains and 8 small chains. Forms a CsoS2-CsoS1-RuBisCO complex. The N-terminus (residues 1-136) interacts with shell proteins CsoS1A, CsoS1B and CsoS1C. Holo-RuBisCO interacts with the N-terminal repeats of CsoS2; binding is sensitive to ionic strength. A fusion of a single N-terminal repeat to the C-terminus of the large subunit of RuBisCO (cbbL) shows the repeat can lie between a CbbL dimer, making minor contacts to CbbS; thus each RuBisCO holoenzyme could bind 8 repeats. Mg(2+) is required as a cofactor.

It localises to the carboxysome. The catalysed reaction is 2 (2R)-3-phosphoglycerate + 2 H(+) = D-ribulose 1,5-bisphosphate + CO2 + H2O. It catalyses the reaction D-ribulose 1,5-bisphosphate + O2 = 2-phosphoglycolate + (2R)-3-phosphoglycerate + 2 H(+). RuBisCO catalyzes two reactions: the carboxylation of D-ribulose 1,5-bisphosphate, the primary event in carbon dioxide fixation, as well as the oxidative fragmentation of the pentose substrate. Both reactions occur simultaneously and in competition at the same active site. There are estimated to be 270 RuBisCO heterohexadecamers per carboxysome. In terms of biological role, alpha-carboxysomes are able to assemble in the absence of RuBisCO, unlike beta-carboxysomes. The RuBisCO large subunit is required for enzyme integration into carboxysomes; replacing it with the carboxysomally targeted gene (Tcr_0838, AC Q31HD9) of H.crungenus places RuBisCO in the carboxysome, while the non-carboxysomal large subunit of H.crungenus (Tcr_0427, AC Q31IK0) is not incorporated in the carboxysome. The protein is Ribulose bisphosphate carboxylase large chain of Halothiobacillus neapolitanus (strain ATCC 23641 / c2) (Thiobacillus neapolitanus).